The following is a 47-amino-acid chain: Delta-actitoxin-Aspp1a (47 aa).

Intrachain disulfides connect cysteine 4-cysteine 44, cysteine 6-cysteine 34, and cysteine 27-cysteine 45.

The protein belongs to the sea anemone sodium channel inhibitory toxin family. Type I subfamily.

It localises to the secreted. It is found in the nematocyst. In terms of biological role, binds specifically to voltage-gated sodium channels (Nav) (site 3), thereby delaying their inactivation during signal transduction. Has a heart stimulation effect on isolated rat atria that is higher than that of Hk7a, Hk8a and Hk16a. This chain is Delta-actitoxin-Aspp1a, found in Anthopleura sp. (strain 'Zhanjiang') (Sea anemone).